Here is a 1368-residue protein sequence, read N- to C-terminus: Beclin-1-like protein A (1368 aa).

Low complexity-rich tracts occupy residues glycine 24 to proline 57 and asparagine 122 to asparagine 135. 5 disordered regions span residues glycine 24 to glutamate 64, asparagine 122 to methionine 249, asparagine 331 to serine 431, threonine 819 to asparagine 874, and isoleucine 992 to asparagine 1048. Residues alanine 136 to proline 147 are compositionally biased toward polar residues. Residues asparagine 148–asparagine 167 show a composition bias toward low complexity. Residues glycine 168–phenylalanine 177 show a composition bias toward polar residues. Positions asparagine 179–serine 246 are enriched in low complexity. 2 stretches are compositionally biased toward low complexity: residues isoleucine 992 to asparagine 1005 and asparagine 1015 to asparagine 1048. Positions asparagine 1047 to serine 1150 form a coiled coil.

This sequence belongs to the beclin family.

It localises to the endosome membrane. Its function is as follows. Involved in autophagy. May be required to recruit the atg8-phosphatidylinositol conjugate and the atg12-atg5 conjugate to the pre-autophagosomal structure. Required for normal survival when exposed to pathogenic bacteria S.typhimurium by promoting autophagic degradation of intracellular S.typhimurium. This is Beclin-1-like protein A (atg6A) from Dictyostelium discoideum (Social amoeba).